A 496-amino-acid polypeptide reads, in one-letter code: Histidine--tRNA ligase (496 aa).

Belongs to the class-II aminoacyl-tRNA synthetase family. Homodimer.

Its subcellular location is the cytoplasm. The catalysed reaction is tRNA(His) + L-histidine + ATP = L-histidyl-tRNA(His) + AMP + diphosphate + H(+). In Bartonella bacilliformis (strain ATCC 35685 / KC583 / Herrer 020/F12,63), this protein is Histidine--tRNA ligase.